A 964-amino-acid chain; its full sequence is Translation initiation factor IF-2 (964 aa).

A compositionally biased stretch (basic and acidic residues) spans 1-10; the sequence is MSDKTNDDKT. A disordered region spans residues 1–379; the sequence is MSDKTNDDKT…SQMQETREKI (379 aa). The span at 27–37 shows a compositional bias: polar residues; the sequence is EQSTVRQNFSH. Residues 77–102 are compositionally biased toward low complexity; it reads APAASTPAPAQAAQPAQAAPVVRAPA. Positions 103–113 are enriched in pro residues; it reads PATPAPKPAAP. The span at 114–140 shows a compositional bias: low complexity; it reads AAPVTKPHVAQQRPAQQRPGGQQAQRP. Composition is skewed to basic and acidic residues over residues 156–227 and 234–243; these read SEMD…EAAK and ARTERRDDAR. The span at 250 to 278 shows a compositional bias: low complexity; that stretch reads RPQQAGRPQGNRPPQGGRPQQGGPRPAAP. A compositionally biased stretch (basic and acidic residues) spans 323 to 338; that stretch reads PEVRAPKVVKTEDDRR. Residues 462 to 629 form the tr-type G domain; the sequence is SRPPVVTIMG…AILLQAEILD (168 aa). The interval 471 to 478 is G1; sequence GHVDHGKT. Position 471-478 (471-478) interacts with GTP; it reads GHVDHGKT. Residues 496-500 are G2; the sequence is GITQH. Residues 517–520 form a G3 region; the sequence is DTPG. GTP contacts are provided by residues 517–521 and 571–574; these read DTPGH and NKID. The G4 stretch occupies residues 571 to 574; it reads NKID. The G5 stretch occupies residues 607–609; sequence SAK.

Belongs to the TRAFAC class translation factor GTPase superfamily. Classic translation factor GTPase family. IF-2 subfamily.

It localises to the cytoplasm. Functionally, one of the essential components for the initiation of protein synthesis. Protects formylmethionyl-tRNA from spontaneous hydrolysis and promotes its binding to the 30S ribosomal subunits. Also involved in the hydrolysis of GTP during the formation of the 70S ribosomal complex. This Brucella anthropi (strain ATCC 49188 / DSM 6882 / CCUG 24695 / JCM 21032 / LMG 3331 / NBRC 15819 / NCTC 12168 / Alc 37) (Ochrobactrum anthropi) protein is Translation initiation factor IF-2.